The chain runs to 411 residues: Arginine deiminase (411 aa).

Residue Cys-401 is the Amidino-cysteine intermediate of the active site.

The protein belongs to the arginine deiminase family.

The protein resides in the cytoplasm. The enzyme catalyses L-arginine + H2O = L-citrulline + NH4(+). The protein operates within amino-acid degradation; L-arginine degradation via ADI pathway; carbamoyl phosphate from L-arginine: step 1/2. The protein is Arginine deiminase of Staphylococcus aureus (strain bovine RF122 / ET3-1).